The sequence spans 347 residues: Eukaryotic translation initiation factor 3 subunit I (347 aa).

6 WD repeats span residues 8 to 47 (GHER…RLGT), 50 to 89 (GHTG…VIHT), 91 to 135 (TAPV…VTKE), 151 to 190 (ENHK…FITS), 193 to 232 (LHTQ…QLKS), and 290 to 329 (GHFG…FDFK).

The protein belongs to the eIF-3 subunit I family. As to quaternary structure, component of the eukaryotic translation initiation factor 3 (eIF-3) complex.

It localises to the cytoplasm. Its function is as follows. Component of the eukaryotic translation initiation factor 3 (eIF-3) complex, which is involved in protein synthesis of a specialized repertoire of mRNAs and, together with other initiation factors, stimulates binding of mRNA and methionyl-tRNAi to the 40S ribosome. The eIF-3 complex specifically targets and initiates translation of a subset of mRNAs involved in cell proliferation. This Vanderwaltozyma polyspora (strain ATCC 22028 / DSM 70294 / BCRC 21397 / CBS 2163 / NBRC 10782 / NRRL Y-8283 / UCD 57-17) (Kluyveromyces polysporus) protein is Eukaryotic translation initiation factor 3 subunit I.